Here is a 440-residue protein sequence, read N- to C-terminus: Damage-control phosphatase ARMT1 (440 aa).

Mn(2+)-binding residues include Asp252 and Asn253. Substrate is bound at residue 252-253 (DN). Positions 257 and 290 each coordinate S-adenosyl-L-methionine. A Mn(2+)-binding site is contributed by Asp290. Substrate is bound by residues 366–370 (DLNYR) and Lys403. The short motif at 400–403 (RTLK) is the Subfamily III RTxK motif element.

The protein belongs to the damage-control phosphatase family. Sugar phosphate phosphatase III subfamily. It depends on Mn(2+) as a cofactor. Requires Ni(2+) as cofactor. Automethylated.

The catalysed reaction is beta-D-fructose 1-phosphate + H2O = D-fructose + phosphate. The enzyme catalyses beta-D-fructose 6-phosphate = dihydroxyacetone + D-glyceraldehyde 3-phosphate. It catalyses the reaction L-glutamyl-[protein] + S-adenosyl-L-methionine = [protein]-L-glutamate 5-O-methyl ester + S-adenosyl-L-homocysteine. Functionally, metal-dependent phosphatase that shows phosphatase activity against several substrates, including fructose-1-phosphate and fructose-6-phosphate. Its preference for fructose-1-phosphate, a strong glycating agent that causes DNA damage rather than a canonical yeast metabolite, suggests a damage-control function in hexose phosphate metabolism. Has also been shown to have O-methyltransferase activity that methylates glutamate residues of target proteins to form gamma-glutamyl methyl ester residues. Possibly methylates PCNA, suggesting it is involved in the DNA damage response. In Xenopus tropicalis (Western clawed frog), this protein is Damage-control phosphatase ARMT1.